Reading from the N-terminus, the 317-residue chain is Malate dehydrogenase (317 aa).

Residues 7–13 (GAAGGIG) and aspartate 34 each bind NAD(+). 2 residues coordinate substrate: arginine 81 and arginine 87. NAD(+)-binding positions include asparagine 94 and 117 to 119 (VTN). The substrate site is built by asparagine 119 and arginine 153. The active-site Proton acceptor is histidine 177. Residue methionine 231 participates in NAD(+) binding.

This sequence belongs to the LDH/MDH superfamily. MDH type 1 family. In terms of assembly, homodimer.

It catalyses the reaction (S)-malate + NAD(+) = oxaloacetate + NADH + H(+). Functionally, catalyzes the reversible oxidation of malate to oxaloacetate. This chain is Malate dehydrogenase, found in Actinobacillus pleuropneumoniae serotype 5b (strain L20).